The primary structure comprises 54 residues: Ovomucoid (54 aa).

The Kazal-like domain occupies 4–54; that stretch reads VDCSDYPKPSCTLEDKPLCGSDNQTYSNKCSFCNAVVDSNGTLTLSHFGKC. Disulfide bonds link Cys-6–Cys-36, Cys-14–Cys-33, and Cys-22–Cys-54. N-linked (GlcNAc...) asparagine glycosylation occurs at Asn-43.

Its subcellular location is the secreted. This Megapodius freycinet (Dusky scrubfowl) protein is Ovomucoid.